Consider the following 420-residue polypeptide: Imidazolonepropionase (420 aa).

Residues histidine 77 and histidine 79 each coordinate Fe(3+). The Zn(2+) site is built by histidine 77 and histidine 79. Residues arginine 86, tyrosine 149, and histidine 182 each contribute to the 4-imidazolone-5-propanoate site. Residue tyrosine 149 participates in N-formimidoyl-L-glutamate binding. Position 245 (histidine 245) interacts with Fe(3+). Histidine 245 provides a ligand contact to Zn(2+). Glutamate 248 is a binding site for 4-imidazolone-5-propanoate. Aspartate 319 contributes to the Fe(3+) binding site. Aspartate 319 serves as a coordination point for Zn(2+). Asparagine 321 provides a ligand contact to N-formimidoyl-L-glutamate.

Belongs to the metallo-dependent hydrolases superfamily. HutI family. Zn(2+) is required as a cofactor. The cofactor is Fe(3+).

It is found in the cytoplasm. The catalysed reaction is 4-imidazolone-5-propanoate + H2O = N-formimidoyl-L-glutamate. The protein operates within amino-acid degradation; L-histidine degradation into L-glutamate; N-formimidoyl-L-glutamate from L-histidine: step 3/3. Functionally, catalyzes the hydrolytic cleavage of the carbon-nitrogen bond in imidazolone-5-propanoate to yield N-formimidoyl-L-glutamate. It is the third step in the universal histidine degradation pathway. This is Imidazolonepropionase from Haloarcula marismortui (strain ATCC 43049 / DSM 3752 / JCM 8966 / VKM B-1809) (Halobacterium marismortui).